The following is a 267-amino-acid chain: Heme-containing CO-sensing transcriptional regulator RcoM 2 (267 aa).

The PAS domain maps to 15–86 (RAETFQHKLE…KSRDKLRFLL (72 aa)). His74 and Met104 together coordinate heme. One can recognise an HTH LytTR-type domain in the interval 161 to 266 (IPVYRKSRVI…TAQLKELLGV (106 aa)).

It depends on heme as a cofactor.

The protein localises to the cytoplasm. Its function is as follows. One-component, b-type heme-containing aerobic sensor and transcriptional regulator that responds to CO by activating the expression of the oxidation operon cox. The sequence is that of Heme-containing CO-sensing transcriptional regulator RcoM 2 (rcoM2) from Paraburkholderia xenovorans (strain LB400).